The chain runs to 223 residues: Glucosyl-3-phosphoglycerate phosphatase (223 aa).

Residue R10 coordinates substrate. The active-site Tele-phosphohistidine intermediate is H11. K47 participates in a covalent cross-link: Isoglutamyl lysine isopeptide (Lys-Gln) (interchain with Q-Cter in protein Pup). R60 provides a ligand contact to substrate. The active-site Proton donor/acceptor is the E84. Position 159 (H159) interacts with substrate.

This sequence belongs to the phosphoglycerate mutase family. As to quaternary structure, homodimer. Dimerization of the enzyme is essential for its dephosphorylation activity.

The enzyme catalyses (2R)-2-O-(alpha-D-glucopyranosyl)-3-phospho-glycerate + H2O = (2R)-2-O-(alpha-D-glucopyranosyl)-glycerate + phosphate. It catalyses the reaction 2-O-(alpha-D-mannosyl)-3-phosphoglycerate + H2O = (2R)-2-O-(alpha-D-mannosyl)-glycerate + phosphate. The catalysed reaction is (2R)-2-O-[alpha-D-mannopyranosyl-(1-&gt;2)-alpha-D-glucopyranosyl]-3-phospho-glycerate + H2O = (2R)-2-O-[alpha-D-mannopyranosyl-(1-&gt;2)-alpha-D-glucopyranosyl]-glycerate + phosphate. Progressively inhibited by cobalt ions at concentrations between 10-50 mM and by copper ions at any concentration between 1-50 mM. Involved in the biosynthesis of mycobacterial methylglucose lipopolysaccharides (MGLPs). Catalyzes the dephosphorylation of glucosyl-3-phosphoglycerate (GPG) to glucosylglycerate (GG). GPG is the preferred substrate, but GpgP also exhibits low dephosphorylation activity on mannosyl-3-phosphoglycerate (MPG) and mannosylglucosyl-3-phosphoglycerate (MGPG) in vitro. Shows only trace of phosphoglycerate mutase (PGM) activity. The sequence is that of Glucosyl-3-phosphoglycerate phosphatase from Mycobacterium tuberculosis (strain ATCC 25618 / H37Rv).